We begin with the raw amino-acid sequence, 506 residues long: L-amino-acid oxidase (506 aa).

The signal sequence occupies residues 1–18; that stretch reads MNVFFTFSLLFLAALGSC. Cys-28 and Cys-191 are joined by a disulfide. Residue Glu-36 coordinates Zn(2+). Residues 61-62, Ser-62, 81-82, Arg-89, and 105-108 each bind FAD; these read MS, EA, and GPMR. Arg-108 contributes to the substrate binding site. The Zn(2+) site is built by Glu-111, Glu-118, and Glu-150. The N-linked (GlcNAc...) asparagine glycan is linked to Asn-190. Asp-219 is a Zn(2+) binding site. Residue His-241 participates in substrate binding. Zn(2+) is bound at residue Glu-248. Val-279 is a binding site for FAD. Residues Glu-299 and His-332 each contribute to the Zn(2+) site. Residues Cys-349 and Cys-430 are joined by a disulfide bond. A substrate-binding site is contributed by Tyr-390. His-458 contacts Zn(2+). FAD is bound by residues Glu-475 and 482–487; that span reads GWIDST. Residue 482–483 participates in substrate binding; sequence GW.

The protein belongs to the flavin monoamine oxidase family. FIG1 subfamily. Homodimer; non-covalently linked. Stabilized by a single zinc-binding site located at the dimer interface (Asp-219, His-332 and His-458). Other zinc-bind sites can be understood as transient and non-specific, and appear due to the high concentration of zinc ions used in the crystallization experiments. FAD is required as a cofactor. As to expression, expressed by the venom gland.

The protein localises to the secreted. The enzyme catalyses an L-alpha-amino acid + O2 + H2O = a 2-oxocarboxylate + H2O2 + NH4(+). The catalysed reaction is L-leucine + O2 + H2O = 4-methyl-2-oxopentanoate + H2O2 + NH4(+). It catalyses the reaction L-phenylalanine + O2 + H2O = 3-phenylpyruvate + H2O2 + NH4(+). It carries out the reaction L-tryptophan + O2 + H2O = indole-3-pyruvate + H2O2 + NH4(+). The enzyme catalyses L-methionine + O2 + H2O = 4-methylsulfanyl-2-oxobutanoate + H2O2 + NH4(+). The catalysed reaction is L-isoleucine + O2 + H2O = (S)-3-methyl-2-oxopentanoate + H2O2 + NH4(+). It catalyses the reaction L-tyrosine + O2 + H2O = 3-(4-hydroxyphenyl)pyruvate + H2O2 + NH4(+). Functionally, catalyzes an oxidative deamination of predominantly hydrophobic and aromatic L-amino acids, thus producing hydrogen peroxide that may contribute to the diverse toxic effects of this enzyme. Shows high catalytic activity against L-Met, L-Leu, L-Phe, L-Trp, L-Tyr, L-Ile. Shows no or weak activity on L-Cys, L-Val, L-Gln, L-Thr, L-Ser, L-Lys, L-Arg, L-Asn, L-Glu, L-Gly, L-Pro, L-Asp and L-His. Induces platelet aggregation in platelet-rich plasma, probably due to hydrogen peroxide production, since catalase inhibits aggregation effect. Induces moderate mouse paw edema. Induces apoptosis and shows cytotoxicity against several cancer cell lines, which is inhibited by catalase. Shows hemolytic activity and antibacterial activities against both Gram-positive and Gram-negative bacteria. Has parasiticidal activities against both trypanosomes and leishmania, as a result of enzyme-catalyzed hydrogen peroxide production. Unlike other snake venom L-amino acid oxidases, does not induce hemorrhage (with 50 ug of enzyme). This chain is L-amino-acid oxidase, found in Bothrops atrox (Barba amarilla).